A 319-amino-acid polypeptide reads, in one-letter code: tRNA-cytidine(32) 2-sulfurtransferase (319 aa).

Positions 43 to 48 match the PP-loop motif motif; that stretch reads SGGKDS. Residues Cys118, Cys121, and Cys209 each contribute to the [4Fe-4S] cluster site.

This sequence belongs to the TtcA family. Homodimer. It depends on Mg(2+) as a cofactor. [4Fe-4S] cluster serves as cofactor.

The protein resides in the cytoplasm. The enzyme catalyses cytidine(32) in tRNA + S-sulfanyl-L-cysteinyl-[cysteine desulfurase] + AH2 + ATP = 2-thiocytidine(32) in tRNA + L-cysteinyl-[cysteine desulfurase] + A + AMP + diphosphate + H(+). It functions in the pathway tRNA modification. Catalyzes the ATP-dependent 2-thiolation of cytidine in position 32 of tRNA, to form 2-thiocytidine (s(2)C32). The sulfur atoms are provided by the cysteine/cysteine desulfurase (IscS) system. The chain is tRNA-cytidine(32) 2-sulfurtransferase from Neisseria meningitidis serogroup A / serotype 4A (strain DSM 15465 / Z2491).